The sequence spans 133 residues: Small ribosomal subunit protein uS19 (133 aa).

It belongs to the universal ribosomal protein uS19 family.

Protein S19 forms a complex with S13 that binds strongly to the 16S ribosomal RNA. This Thermococcus onnurineus (strain NA1) protein is Small ribosomal subunit protein uS19.